A 424-amino-acid chain; its full sequence is Phosphomethylpyrimidine synthase (424 aa).

Substrate-binding positions include methionine 94, tyrosine 123, histidine 162, 184 to 186 (SRG), 225 to 228 (NGMR), and glutamate 264. Residue histidine 268 participates in Zn(2+) binding. Position 291 (tyrosine 291) interacts with substrate. A Zn(2+)-binding site is contributed by histidine 332. Positions 406, 409, and 413 each coordinate [4Fe-4S] cluster.

This sequence belongs to the ThiC family. [4Fe-4S] cluster serves as cofactor.

The enzyme catalyses 5-amino-1-(5-phospho-beta-D-ribosyl)imidazole + S-adenosyl-L-methionine = 4-amino-2-methyl-5-(phosphooxymethyl)pyrimidine + CO + 5'-deoxyadenosine + formate + L-methionine + 3 H(+). The protein operates within cofactor biosynthesis; thiamine diphosphate biosynthesis. In terms of biological role, catalyzes the synthesis of the hydroxymethylpyrimidine phosphate (HMP-P) moiety of thiamine from aminoimidazole ribotide (AIR) in a radical S-adenosyl-L-methionine (SAM)-dependent reaction. The polypeptide is Phosphomethylpyrimidine synthase (Methanoculleus marisnigri (strain ATCC 35101 / DSM 1498 / JR1)).